Consider the following 185-residue polypeptide: Ribosome-recycling factor (185 aa).

It belongs to the RRF family.

The protein resides in the cytoplasm. Its function is as follows. Responsible for the release of ribosomes from messenger RNA at the termination of protein biosynthesis. May increase the efficiency of translation by recycling ribosomes from one round of translation to another. The polypeptide is Ribosome-recycling factor (Actinobacillus pleuropneumoniae serotype 5b (strain L20)).